A 220-amino-acid polypeptide reads, in one-letter code: Orotate phosphoribosyltransferase (220 aa).

Lysine 26 lines the 5-phospho-alpha-D-ribose 1-diphosphate pocket. Position 34–35 (34–35 (FF)) interacts with orotate. Residues 72–73 (YK), arginine 101, lysine 102, lysine 105, histidine 107, and 126–134 (DDVITAGTS) each bind 5-phospho-alpha-D-ribose 1-diphosphate. Orotate-binding residues include threonine 130 and arginine 158.

This sequence belongs to the purine/pyrimidine phosphoribosyltransferase family. PyrE subfamily. As to quaternary structure, homodimer. Mg(2+) is required as a cofactor.

The enzyme catalyses orotidine 5'-phosphate + diphosphate = orotate + 5-phospho-alpha-D-ribose 1-diphosphate. It participates in pyrimidine metabolism; UMP biosynthesis via de novo pathway; UMP from orotate: step 1/2. Its function is as follows. Catalyzes the transfer of a ribosyl phosphate group from 5-phosphoribose 1-diphosphate to orotate, leading to the formation of orotidine monophosphate (OMP). This Bordetella avium (strain 197N) protein is Orotate phosphoribosyltransferase.